The following is a 242-amino-acid chain: 1-(5-phosphoribosyl)-5-[(5-phosphoribosylamino)methylideneamino] imidazole-4-carboxamide isomerase (242 aa).

Asp8 serves as the catalytic Proton acceptor. Asp129 acts as the Proton donor in catalysis.

It belongs to the HisA/HisF family.

The protein localises to the cytoplasm. The enzyme catalyses 1-(5-phospho-beta-D-ribosyl)-5-[(5-phospho-beta-D-ribosylamino)methylideneamino]imidazole-4-carboxamide = 5-[(5-phospho-1-deoxy-D-ribulos-1-ylimino)methylamino]-1-(5-phospho-beta-D-ribosyl)imidazole-4-carboxamide. It functions in the pathway amino-acid biosynthesis; L-histidine biosynthesis; L-histidine from 5-phospho-alpha-D-ribose 1-diphosphate: step 4/9. This chain is 1-(5-phosphoribosyl)-5-[(5-phosphoribosylamino)methylideneamino] imidazole-4-carboxamide isomerase, found in Clostridium botulinum (strain Langeland / NCTC 10281 / Type F).